Consider the following 327-residue polypeptide: PDZ and LIM domain protein 1 (327 aa).

T2 carries the N-acetylthreonine modification. The PDZ domain occupies 3 to 85 (TQQIVLQGPG…NMTLTVSRSE (83 aa)). Phosphoserine is present on residues S90 and S130. Y142 bears the Phosphotyrosine mark. Residues 161–186 (VESKTSASGEEANSRPSAQPHPSGGL) form a disordered region. The 60-residue stretch at 256–315 (PICDKCGTGIVGVFVKLRDHHRHPECYVCTDCGINLKQKGHFFVGDQIYCEKHARERVTP) folds into the LIM zinc-binding domain. Residues C258, C261, H278, C281, C284, C287, C305, and H308 each coordinate Zn(2+). T314 is modified (phosphothreonine). Phosphotyrosine is present on Y319.

As to quaternary structure, interacts with ACTN1. Interacts with ACTN2 and ACTN4. Interacts with PDLIM4. As to expression, expressed most abundantly in heart, lung and liver, moderately in spleen and skeletal muscle, and at extremely low levels (if at all) in testis and brain tissues.

The protein localises to the cytoplasm. The protein resides in the cytoskeleton. It is found in the myofibril. It localises to the sarcomere. Its subcellular location is the z line. Functionally, cytoskeletal protein that may act as an adapter that brings other proteins (like kinases) to the cytoskeleton. Involved in assembly, disassembly and directioning of stress fibers in fibroblasts. Required for the localization of ACTN1 and PALLD to stress fibers. Required for cell migration and in maintaining cell polarity of fibroblasts. The polypeptide is PDZ and LIM domain protein 1 (Pdlim1) (Rattus norvegicus (Rat)).